The chain runs to 266 residues: ATP synthase subunit a (266 aa).

The next 6 helical transmembrane spans lie at 38-58, 99-119, 126-146, 162-182, 191-211, and 224-244; these read KQML…VLAA, LLFS…IPLI, HVGG…AIGI, GVPW…NFVV, LFAT…GIEY, and SVLV…IMVL.

The protein belongs to the ATPase A chain family. F-type ATPases have 2 components, CF(1) - the catalytic core - and CF(0) - the membrane proton channel. CF(1) has five subunits: alpha(3), beta(3), gamma(1), delta(1), epsilon(1). CF(0) has three main subunits: a(1), b(2) and c(9-12). The alpha and beta chains form an alternating ring which encloses part of the gamma chain. CF(1) is attached to CF(0) by a central stalk formed by the gamma and epsilon chains, while a peripheral stalk is formed by the delta and b chains.

It localises to the cell membrane. Key component of the proton channel; it plays a direct role in the translocation of protons across the membrane. This Pseudarthrobacter chlorophenolicus (strain ATCC 700700 / DSM 12829 / CIP 107037 / JCM 12360 / KCTC 9906 / NCIMB 13794 / A6) (Arthrobacter chlorophenolicus) protein is ATP synthase subunit a.